Here is a 184-residue protein sequence, read N- to C-terminus: Calmodulin-related protein (184 aa).

4 EF-hand domains span residues Asp-8–Asn-43, Pro-44–Asp-79, Asp-81–Lys-116, and Leu-117–Arg-152. Residues Asp-21, Asp-23, Asp-25, Cys-27, Glu-32, Asp-57, Asp-59, Asn-61, Thr-63, Glu-68, Asp-94, Asp-96, Asn-98, and Glu-105 each contribute to the Ca(2+) site. At Lys-116 the chain carries N6,N6,N6-trimethyllysine. The Ca(2+) site is built by Asp-130, Asp-132, Asp-134, Gln-136, and Glu-141. The tract at residues Glu-156–Leu-184 is disordered. Low complexity predominate over residues Ser-161 to Asn-170. Over residues Asn-171–Leu-184 the composition is skewed to basic residues.

Belongs to the calmodulin family.

Functionally, calmodulin mediates the control of a large number of enzymes, ion channels and other proteins by Ca(2+). Among the enzymes to be stimulated by the calmodulin-Ca(2+) complex are a number of protein kinases and phosphatases. The sequence is that of Calmodulin-related protein (CAM53) from Petunia hybrida (Petunia).